The primary structure comprises 399 residues: Fructose-1,6-bisphosphate aldolase/phosphatase (399 aa).

Residue Asp11 is the Proton acceptor; for FBP phosphatase activity of the active site. The Mg(2+) site is built by Asp11, His18, Asp52, and Asp53. His18 contributes to the beta-D-fructose 1,6-bisphosphate binding site. His18 contacts dihydroxyacetone phosphate. Residue Tyr91 coordinates beta-D-fructose 1,6-bisphosphate. Gln95 is a binding site for Mg(2+). 104–105 lines the beta-D-fructose 1,6-bisphosphate pocket; sequence GN. A Mg(2+)-binding site is contributed by Asp132. Lys133 contacts beta-D-fructose 1,6-bisphosphate. Lys133 contacts dihydroxyacetone phosphate. Tyr229 functions as the Proton donor/acceptor; for FBP aldolase activity in the catalytic mechanism. Mg(2+) is bound by residues Lys232, Asp233, and Asp234. Lys232 (schiff-base intermediate with DHAP; for FBP aldolase activity) is an active-site residue. Beta-D-fructose 1,6-bisphosphate is bound by residues 242–243, Arg266, Asp297, and Tyr358; that span reads QS. 2 residues coordinate dihydroxyacetone phosphate: Arg266 and Asp297.

It belongs to the FBP aldolase/phosphatase family. As to quaternary structure, homooctamer; dimer of tetramers. It depends on Mg(2+) as a cofactor.

The catalysed reaction is beta-D-fructose 1,6-bisphosphate + H2O = beta-D-fructose 6-phosphate + phosphate. The enzyme catalyses beta-D-fructose 1,6-bisphosphate = D-glyceraldehyde 3-phosphate + dihydroxyacetone phosphate. The protein operates within carbohydrate biosynthesis; gluconeogenesis. Catalyzes two subsequent steps in gluconeogenesis: the aldol condensation of dihydroxyacetone phosphate (DHAP) and glyceraldehyde-3-phosphate (GA3P) to fructose-1,6-bisphosphate (FBP), and the dephosphorylation of FBP to fructose-6-phosphate (F6P). This is Fructose-1,6-bisphosphate aldolase/phosphatase from Pyrobaculum neutrophilum (strain DSM 2338 / JCM 9278 / NBRC 100436 / V24Sta) (Thermoproteus neutrophilus).